Here is a 688-residue protein sequence, read N- to C-terminus: MSDDMVLHFSSNSSNQSDHSLPDKIAKLEARLTGKTPSSAKPPQQQQQQQQQVSLWSSASAAVKVVTSTPPGLSETSISDSDDENTGDFLIRANTKKRQKVQESNNFSVVDHVEPQEAAYDGRKNDAESKTGLDVSKKKQGRGRASSTGRGRGSKTNNDVTKSQFVVAPVSAASQLDASDQKDFRPDGQLRNGECSLQDEDLKSLRAKIAMLEEELRKSRQDSSEYHHLVRNLENEVKDLKDQEQQGKQKTTKVISDLLISVSKTERQEARTKVRNESLRLGSVGVLRTGTIIAETWEDGQMLKDLNAQLRQLLETKEAIERQRKLLKKRQNGDKNDGTDTESGAQEEDIIPDEVYKSRLTSIKREEEAVLRERERYTLEKGLLMREMKRIRDEDGSRFNHFPVLNSRYALLNLLGKGGFSEVYKAYDLVDHRYVACKLHGLNAQWSEEKKQSYIRHANRECEIHKSLVHHHIVRLWDKFHIDMHTFCTVLEYCSGKDLDAVLKATSNLPEKEARIIIVQIVQGLVYLNKKSQKIIHYDLKPGNVLFDEFGVAKVTDFGLSKIVEDNVGSQGMELTSQGAGTYWYLPPECFELNKTPMISSKVDVWSVGVLFYQMLFGKRPFGHDQSQERILREDTIIKAKKVEFPVTRPAISNEAKDLIRRCLTYNQEDRPDVLTMAQDPYLAYSKK.

2 disordered regions span residues 1–196 (MSDD…GECS) and 326–348 (LLKK…AQEE). Low complexity predominate over residues 10 to 19 (SSNSSNQSDH). Over residues 20–32 (SLPDKIAKLEARL) the composition is skewed to basic and acidic residues. Over residues 35–70 (KTPSSAKPPQQQQQQQQQVSLWSSASAAVKVVTSTP) the composition is skewed to low complexity. 2 short sequence motifs (nuclear localization signal) span residues 97-100 (KRQK) and 123-139 (RKND…SKKK). Residues 111 to 137 (DHVEPQEAAYDGRKNDAESKTGLDVSK) are compositionally biased toward basic and acidic residues. Residues 155 to 164 (KTNNDVTKSQ) are compositionally biased toward polar residues. The span at 179–188 (SDQKDFRPDG) shows a compositional bias: basic and acidic residues. Coiled-coil stretches lie at residues 194–253 (ECSL…KTTK) and 298–332 (EDGQ…KRQN). The Nuclear localization signal motif lies at 389 to 392 (KRIR). The Protein kinase domain occupies 409–683 (YALLNLLGKG…VLTMAQDPYL (275 aa)). Residues 415–423 (LGKGGFSEV) and Lys438 contribute to the ATP site. Residue Asp539 is the Proton acceptor of the active site.

Belongs to the protein kinase superfamily. Ser/Thr protein kinase family. As to quaternary structure, homooligomer. Interacts with TKI1 and ASF1B/SGA1. Requires Mg(2+) as cofactor. The cofactor is Mn(2+). In terms of processing, autophosphorylation on both phosphoserine and phosphothreonine. In terms of tissue distribution, most abundant in developing floral meristem. Also expressed in maturing flowers, developing seeds, mature leaves and roots. Barely detected in stems.

The protein resides in the nucleus. The enzyme catalyses L-seryl-[protein] + ATP = O-phospho-L-seryl-[protein] + ADP + H(+). It catalyses the reaction L-threonyl-[protein] + ATP = O-phospho-L-threonyl-[protein] + ADP + H(+). Oligomerization is required for activity. May be activated by trans-autophosphorylation. Higher activity during G2/M phase and G1 phase compared to S phase. Its function is as follows. Required for correct initiation of floral organ primordia and for proper development of organ primordia. Phosphorylates in vitro ASF1B/SGA1, the C-terminal part of TKI1 and histone H3. This chain is Serine/threonine-protein kinase TOUSLED (TOUSLED), found in Arabidopsis thaliana (Mouse-ear cress).